A 210-amino-acid polypeptide reads, in one-letter code: Probable membrane protein MT1774 (210 aa).

The next 2 helical transmembrane spans lie at 43–63 and 165–185; these read AVVMLLAVTVSLLTIPFAAAA and ALAALGLWLSVAAVAGALLAL.

It is found in the cell membrane. The polypeptide is Probable membrane protein MT1774 (Mycobacterium tuberculosis (strain CDC 1551 / Oshkosh)).